A 121-amino-acid chain; its full sequence is Phosphoribosyl-AMP cyclohydrolase (121 aa).

Mg(2+) is bound at residue D76. Residue C77 coordinates Zn(2+). Mg(2+)-binding residues include D78 and D80. 2 residues coordinate Zn(2+): C93 and C100.

It belongs to the PRA-CH family. Homodimer. Requires Mg(2+) as cofactor. The cofactor is Zn(2+).

It localises to the cytoplasm. The catalysed reaction is 1-(5-phospho-beta-D-ribosyl)-5'-AMP + H2O = 1-(5-phospho-beta-D-ribosyl)-5-[(5-phospho-beta-D-ribosylamino)methylideneamino]imidazole-4-carboxamide. It functions in the pathway amino-acid biosynthesis; L-histidine biosynthesis; L-histidine from 5-phospho-alpha-D-ribose 1-diphosphate: step 3/9. Its function is as follows. Catalyzes the hydrolysis of the adenine ring of phosphoribosyl-AMP. This is Phosphoribosyl-AMP cyclohydrolase from Methanococcoides burtonii (strain DSM 6242 / NBRC 107633 / OCM 468 / ACE-M).